Reading from the N-terminus, the 196-residue chain is ATP-dependent Clp protease proteolytic subunit (196 aa).

Catalysis depends on S98, which acts as the Nucleophile. Residue H123 is part of the active site.

It belongs to the peptidase S14 family. In terms of assembly, fourteen ClpP subunits assemble into 2 heptameric rings which stack back to back to give a disk-like structure with a central cavity, resembling the structure of eukaryotic proteasomes.

The protein localises to the cytoplasm. It carries out the reaction Hydrolysis of proteins to small peptides in the presence of ATP and magnesium. alpha-casein is the usual test substrate. In the absence of ATP, only oligopeptides shorter than five residues are hydrolyzed (such as succinyl-Leu-Tyr-|-NHMec, and Leu-Tyr-Leu-|-Tyr-Trp, in which cleavage of the -Tyr-|-Leu- and -Tyr-|-Trp bonds also occurs).. Cleaves peptides in various proteins in a process that requires ATP hydrolysis. Has a chymotrypsin-like activity. Plays a major role in the degradation of misfolded proteins. ClpXP is involved in the complete degradation of the Site-2 clipped anti-sigma-W factor RsiW. This results in the release of SigW and the transcription activation of the genes under the control of the sigma-W factor. In Geobacillus kaustophilus (strain HTA426), this protein is ATP-dependent Clp protease proteolytic subunit.